The following is a 268-amino-acid chain: Nickel import ATP-binding protein NikE (268 aa).

The ABC transporter domain maps to 4-252 (LNVCGLSHHY…SSDAGRVLQN (249 aa)). 45–52 (GRSGCGKS) is a binding site for ATP.

It belongs to the ABC transporter superfamily. Nickel importer (TC 3.A.1.5.3) family. The complex is composed of two ATP-binding proteins (NikD and NikE), two transmembrane proteins (NikB and NikC) and a solute-binding protein (NikA).

The protein resides in the cell inner membrane. It carries out the reaction Ni(2+)(out) + ATP + H2O = Ni(2+)(in) + ADP + phosphate + H(+). Part of the ABC transporter complex NikABCDE involved in nickel import. Responsible for energy coupling to the transport system. The protein is Nickel import ATP-binding protein NikE of Shigella flexneri.